Reading from the N-terminus, the 191-residue chain is UPF0149 protein VV2847 (191 aa).

It belongs to the UPF0149 family.

The sequence is that of UPF0149 protein VV2847 from Vibrio vulnificus (strain YJ016).